We begin with the raw amino-acid sequence, 405 residues long: Formate-dependent phosphoribosylglycinamide formyltransferase (405 aa).

N(1)-(5-phospho-beta-D-ribosyl)glycinamide-binding positions include 27–28 (EL) and Glu-87. ATP contacts are provided by residues Arg-120, Lys-162, 167–172 (SSGKGQ), 202–205 (EGFI), and Glu-210. The region spanning 125–320 (RLAAETLGLP…EFELHARALL (196 aa)) is the ATP-grasp domain. Residues Glu-279 and Glu-291 each contribute to the Mg(2+) site. Residues Asp-298, Lys-367, and 374–375 (RR) each bind N(1)-(5-phospho-beta-D-ribosyl)glycinamide.

Belongs to the PurK/PurT family. In terms of assembly, homodimer.

The catalysed reaction is N(1)-(5-phospho-beta-D-ribosyl)glycinamide + formate + ATP = N(2)-formyl-N(1)-(5-phospho-beta-D-ribosyl)glycinamide + ADP + phosphate + H(+). Its pathway is purine metabolism; IMP biosynthesis via de novo pathway; N(2)-formyl-N(1)-(5-phospho-D-ribosyl)glycinamide from N(1)-(5-phospho-D-ribosyl)glycinamide (formate route): step 1/1. Its function is as follows. Involved in the de novo purine biosynthesis. Catalyzes the transfer of formate to 5-phospho-ribosyl-glycinamide (GAR), producing 5-phospho-ribosyl-N-formylglycinamide (FGAR). Formate is provided by PurU via hydrolysis of 10-formyl-tetrahydrofolate. This is Formate-dependent phosphoribosylglycinamide formyltransferase from Bordetella avium (strain 197N).